Here is a 290-residue protein sequence, read N- to C-terminus: Putative OX-2 membrane glycoprotein homolog (290 aa).

An N-terminal signal peptide occupies residues 1-17 (MSSLMLRLLPLLYIISA). The Extracellular portion of the chain corresponds to 18 to 267 (HFVLHPETSP…SDETVFTWTV (250 aa)). The Ig-like V-type domain maps to 23-135 (PETSPSLIYE…TFTVDNEKTS (113 aa)). A disulfide bond links Cys-41 and Cys-125. Asn-71, Asn-104, Asn-194, and Asn-202 each carry an N-linked (GlcNAc...) asparagine; by host glycan. One can recognise an Ig-like C2-type domain in the interval 146–236 (PIVVLYFRYL…TNQKASALVT (91 aa)). The chain crosses the membrane as a helical span at residues 268-288 (PLILILISVIVLLISVCIVAF). Residues 289-290 (KS) lie on the Cytoplasmic side of the membrane.

Its subcellular location is the membrane. In Homo sapiens (Human), this protein is Putative OX-2 membrane glycoprotein homolog (U85).